We begin with the raw amino-acid sequence, 181 residues long: Large ribosomal subunit protein uL6 (181 aa).

Belongs to the universal ribosomal protein uL6 family. Part of the 50S ribosomal subunit.

In terms of biological role, this protein binds to the 23S rRNA, and is important in its secondary structure. It is located near the subunit interface in the base of the L7/L12 stalk, and near the tRNA binding site of the peptidyltransferase center. The polypeptide is Large ribosomal subunit protein uL6 (Flavobacterium psychrophilum (strain ATCC 49511 / DSM 21280 / CIP 103535 / JIP02/86)).